The primary structure comprises 386 residues: Succinate--CoA ligase [ADP-forming] subunit beta (386 aa).

Positions 9-244 constitute an ATP-grasp domain; the sequence is KELLRSYGVP…ETEEDPREVE (236 aa). Residues Lys46, 53–55, Glu99, Cys102, and Glu107 each bind ATP; that span reads GRG. Mg(2+)-binding residues include Asn199 and Asp213. Substrate-binding positions include Asn264 and 321 to 323; that span reads GIM.

Belongs to the succinate/malate CoA ligase beta subunit family. Heterotetramer of two alpha and two beta subunits. Mg(2+) is required as a cofactor.

The enzyme catalyses succinate + ATP + CoA = succinyl-CoA + ADP + phosphate. The catalysed reaction is GTP + succinate + CoA = succinyl-CoA + GDP + phosphate. Its pathway is carbohydrate metabolism; tricarboxylic acid cycle; succinate from succinyl-CoA (ligase route): step 1/1. Its function is as follows. Succinyl-CoA synthetase functions in the citric acid cycle (TCA), coupling the hydrolysis of succinyl-CoA to the synthesis of either ATP or GTP and thus represents the only step of substrate-level phosphorylation in the TCA. The beta subunit provides nucleotide specificity of the enzyme and binds the substrate succinate, while the binding sites for coenzyme A and phosphate are found in the alpha subunit. This is Succinate--CoA ligase [ADP-forming] subunit beta from Exiguobacterium sibiricum (strain DSM 17290 / CCUG 55495 / CIP 109462 / JCM 13490 / 255-15).